A 424-amino-acid polypeptide reads, in one-letter code: Serine--tRNA ligase (424 aa).

232–234 (TAE) lines the L-serine pocket. 263–265 (RQE) is an ATP binding site. Glutamate 286 provides a ligand contact to L-serine. 350–353 (EIGS) contributes to the ATP binding site. Position 386 (serine 386) interacts with L-serine.

Belongs to the class-II aminoacyl-tRNA synthetase family. Type-1 seryl-tRNA synthetase subfamily. As to quaternary structure, homodimer. The tRNA molecule binds across the dimer.

It is found in the cytoplasm. The enzyme catalyses tRNA(Ser) + L-serine + ATP = L-seryl-tRNA(Ser) + AMP + diphosphate + H(+). It carries out the reaction tRNA(Sec) + L-serine + ATP = L-seryl-tRNA(Sec) + AMP + diphosphate + H(+). The protein operates within aminoacyl-tRNA biosynthesis; selenocysteinyl-tRNA(Sec) biosynthesis; L-seryl-tRNA(Sec) from L-serine and tRNA(Sec): step 1/1. Its function is as follows. Catalyzes the attachment of serine to tRNA(Ser). Is also able to aminoacylate tRNA(Sec) with serine, to form the misacylated tRNA L-seryl-tRNA(Sec), which will be further converted into selenocysteinyl-tRNA(Sec). The sequence is that of Serine--tRNA ligase from Onion yellows phytoplasma (strain OY-M).